Here is a 561-residue protein sequence, read N- to C-terminus: Putative transport protein YbjL (561 aa).

5 consecutive transmembrane segments (helical) span residues 8–28 (LLNG…LCLG), 32–52 (LGSI…LLGQ), 66–86 (FMLF…SIFF), 94–114 (MLAL…GKLF), and 158–178 (NLSL…IVGA). RCK C-terminal domains lie at 200 to 288 (RGLD…SFRN) and 292 to 373 (VFDR…RIGF). The next 5 helical transmembrane spans lie at 383–403 (LLAF…TFQF), 406–426 (FSFG…LGFM), 451–471 (VFMA…LGAI), 475–495 (MLIA…LFGA), and 540–560 (AIAN…WPGL).

It belongs to the AAE transporter (TC 2.A.81) family. YbjL subfamily.

The protein resides in the cell membrane. This Escherichia coli O127:H6 (strain E2348/69 / EPEC) protein is Putative transport protein YbjL.